We begin with the raw amino-acid sequence, 1883 residues long: Endoribonuclease Dicer homolog 1 (1883 aa).

3 disordered regions span residues 71–97 (AESS…PELP), 129–188 (ARKE…DDRR), and 221–262 (RSGT…EKPV). Positions 75-96 (PAPPPPPPPPLPEPVPVAPPEL) are enriched in pro residues. Basic and acidic residues-rich tracts occupy residues 129–138 (ARKEPRRESH) and 228–262 (ESDR…EKPV). Residues 274–413 (VLEQAKSRNT…QEDCAIKIRN (140 aa)) enclose the Helicase ATP-binding domain. ATP is bound at residue 287–294 (LETGAGKT). The DECH box motif lies at 358–361 (DECH). A disordered region spans residues 577 to 604 (KSETSDVEMQNTEKHNTNDLEEGELPDS). Positions 629-789 (LIKILLKYQH…RTDLSHLDGT (161 aa)) constitute a Helicase C-terminal domain. A Dicer dsRNA-binding fold domain is found at 817-912 (AVGLIHFYCS…LPDRGSGEGE (96 aa)). The tract at residues 901 to 928 (TLLPDRGSGEGEKTEQNDEGEPLPGTAR) is disordered. Basic and acidic residues predominate over residues 907–916 (GSGEGEKTEQ). The 134-residue stretch at 1163 to 1296 (HFSDYQNQGK…LPPELCLVHP (134 aa)) folds into the PAZ domain. 2 consecutive RNase III domains span residues 1320–1498 (LAVQ…VAGG) and 1538–1686 (FDTL…LDSG). The Mg(2+) site is built by Glu1576, Asp1672, and Glu1675. DRBM domains follow at residues 1712-1775 (HPVR…VLKE) and 1797-1872 (FTRQ…LLNR).

The protein belongs to the helicase family. Dicer subfamily. May interact with ARGONAUTE1 or PINHEAD through their common PAZ domains. The cofactor is Mg(2+). Mn(2+) is required as a cofactor.

It is found in the nucleus. Functionally, involved in the RNA silencing pathway. Cleaves double-stranded RNA to produce microRNAs (miRNAs) of 21-24 nucleotides which target the selective destruction of complementary RNAs. Regulates by this way the development of the plant. May not be involved in small interfering RNAs (siRNAs) production. The sequence is that of Endoribonuclease Dicer homolog 1 (DCL1) from Oryza sativa subsp. japonica (Rice).